The chain runs to 161 residues: Cyclic pyranopterin monophosphate synthase (161 aa).

Residues 75-77 and 113-114 each bind substrate; these read LCH and ME. The active site involves Asp128.

This sequence belongs to the MoaC family. In terms of assembly, homohexamer; trimer of dimers.

It catalyses the reaction (8S)-3',8-cyclo-7,8-dihydroguanosine 5'-triphosphate = cyclic pyranopterin phosphate + diphosphate. Its pathway is cofactor biosynthesis; molybdopterin biosynthesis. Catalyzes the conversion of (8S)-3',8-cyclo-7,8-dihydroguanosine 5'-triphosphate to cyclic pyranopterin monophosphate (cPMP). In Cupriavidus pinatubonensis (strain JMP 134 / LMG 1197) (Cupriavidus necator (strain JMP 134)), this protein is Cyclic pyranopterin monophosphate synthase.